Here is a 199-residue protein sequence, read N- to C-terminus: MSKVLVLKTTAQADEVSNSVALTNRFLEEYKKFNPDDEIIIVDLNKDEVGTSILTSETSSTFYQQEVTKKYINLLKSVDKLVIACPMYNFSTPVTLKSFIDHVSVANETFSYKYSKKGDVIGLITNLKAQILGVQGAPLGWYPWGQHTQYVEGAMRFLGIDFNKTVLLAGVKVAPLLQLTPEQRVETIIDEVIEAARTF.

Residues 17–19 and 87–90 each bind FMN; these read SNS and MYNF.

It belongs to the azoreductase type 1 family. As to quaternary structure, homodimer. FMN serves as cofactor.

The catalysed reaction is 2 a quinone + NADH + H(+) = 2 a 1,4-benzosemiquinone + NAD(+). It catalyses the reaction N,N-dimethyl-1,4-phenylenediamine + anthranilate + 2 NAD(+) = 2-(4-dimethylaminophenyl)diazenylbenzoate + 2 NADH + 2 H(+). Quinone reductase that provides resistance to thiol-specific stress caused by electrophilic quinones. In terms of biological role, also exhibits azoreductase activity. Catalyzes the reductive cleavage of the azo bond in aromatic azo compounds to the corresponding amines. This Mycoplasma mycoides subsp. mycoides SC (strain CCUG 32753 / NCTC 10114 / PG1) protein is FMN-dependent NADH:quinone oxidoreductase.